Here is a 167-residue protein sequence, read N- to C-terminus: Photosystem II extrinsic protein V (167 aa).

The first 30 residues, 1–30 (MVFKTLRRTLWLTLAALLAVFQFNLGAAQA), serve as a signal peptide directing secretion. Positions 67, 70, 71, and 122 each coordinate heme c.

It belongs to the cytochrome c family. PsbV subfamily. PSII is composed of 1 copy each of membrane proteins PsbA, PsbB, PsbC, PsbD, PsbE, PsbF, PsbH, PsbI, PsbJ, PsbK, PsbL, PsbM, PsbT, PsbX, PsbY, PsbZ, Psb30/Ycf12, peripheral proteins PsbO, CyanoQ (PsbQ), PsbU, PsbV and a large number of cofactors. It forms dimeric complexes. Heme c serves as cofactor.

It localises to the cellular thylakoid membrane. One of the extrinsic, lumenal subunits of photosystem II (PSII). PSII is a light-driven water plastoquinone oxidoreductase, using light energy to abstract electrons from H(2)O, generating a proton gradient subsequently used for ATP formation. The extrinsic proteins stabilize the structure of photosystem II oxygen-evolving complex (OEC), the ion environment of oxygen evolution and protect the OEC against heat-induced inactivation. Low-potential cytochrome c that plays a role in the OEC of PSII. This Synechococcus elongatus (strain ATCC 33912 / PCC 7942 / FACHB-805) (Anacystis nidulans R2) protein is Photosystem II extrinsic protein V.